The following is a 418-amino-acid chain: Trans-acting enoyl reductase (418 aa).

The protein belongs to the saccharopine dehydrogenase family. Enoyl reductase subfamily.

Functionally, involved in the reduction of the double bond between C-4 and C-5 during phthiocerol dimycocerosates (DIM A) and glycosylated phenolphthiocerol dimycocerosates (PGL) biosynthesis. This chain is Trans-acting enoyl reductase, found in Mycobacterium leprae (strain TN).